A 983-amino-acid chain; its full sequence is Kinesin-like protein KIN-14I (983 aa).

A Calponin-homology (CH) domain is found at 44-166 (ASRRYEAANW…CVLAIKSYDE (123 aa)). Polar residues-rich tracts occupy residues 203–214 (SLSRTSSINNEK) and 278–287 (ESTSSQNNRS). Disordered stretches follow at residues 203 to 227 (SLSRTSSINNEKAPSENDSNKLSSP) and 276 to 295 (PRESTSSQNNRSFLKPLGER). Residues 399 to 724 (SIRVYCRVRP…LKFAERVATV (326 aa)) enclose the Kinesin motor domain. 481–488 (GQTGSGKT) is a binding site for ATP. The stretch at 731–758 (VNNDTSDVKELKEQIATLKAALARKEAE) forms a coiled coil. Disordered stretches follow at residues 802 to 824 (TVNSPPWPPVASPGQAYREDDRS) and 921 to 983 (TRSN…NARH). Residues 939-951 (SPQSRNNSNNTVS) show a composition bias toward polar residues.

This sequence belongs to the TRAFAC class myosin-kinesin ATPase superfamily. Kinesin family. KIN-14 subfamily.

The protein is Kinesin-like protein KIN-14I of Arabidopsis thaliana (Mouse-ear cress).